Here is an 879-residue protein sequence, read N- to C-terminus: Alanine--tRNA ligase (879 aa).

H567, H571, C669, and H673 together coordinate Zn(2+).

The protein belongs to the class-II aminoacyl-tRNA synthetase family. Requires Zn(2+) as cofactor.

It is found in the cytoplasm. It catalyses the reaction tRNA(Ala) + L-alanine + ATP = L-alanyl-tRNA(Ala) + AMP + diphosphate. Functionally, catalyzes the attachment of alanine to tRNA(Ala) in a two-step reaction: alanine is first activated by ATP to form Ala-AMP and then transferred to the acceptor end of tRNA(Ala). Also edits incorrectly charged Ser-tRNA(Ala) and Gly-tRNA(Ala) via its editing domain. The polypeptide is Alanine--tRNA ligase (Levilactobacillus brevis (strain ATCC 367 / BCRC 12310 / CIP 105137 / JCM 1170 / LMG 11437 / NCIMB 947 / NCTC 947) (Lactobacillus brevis)).